The primary structure comprises 417 residues: NADH-quinone oxidoreductase subunit D (417 aa).

It belongs to the complex I 49 kDa subunit family. NDH-1 is composed of 14 different subunits. Subunits NuoB, C, D, E, F, and G constitute the peripheral sector of the complex.

The protein localises to the cell inner membrane. The enzyme catalyses a quinone + NADH + 5 H(+)(in) = a quinol + NAD(+) + 4 H(+)(out). Functionally, NDH-1 shuttles electrons from NADH, via FMN and iron-sulfur (Fe-S) centers, to quinones in the respiratory chain. The immediate electron acceptor for the enzyme in this species is believed to be ubiquinone. Couples the redox reaction to proton translocation (for every two electrons transferred, four hydrogen ions are translocated across the cytoplasmic membrane), and thus conserves the redox energy in a proton gradient. The polypeptide is NADH-quinone oxidoreductase subunit D (Cupriavidus taiwanensis (strain DSM 17343 / BCRC 17206 / CCUG 44338 / CIP 107171 / LMG 19424 / R1) (Ralstonia taiwanensis (strain LMG 19424))).